Reading from the N-terminus, the 693-residue chain is Glycine--tRNA ligase beta subunit (693 aa).

The protein belongs to the class-II aminoacyl-tRNA synthetase family. In terms of assembly, tetramer of two alpha and two beta subunits.

Its subcellular location is the cytoplasm. The enzyme catalyses tRNA(Gly) + glycine + ATP = glycyl-tRNA(Gly) + AMP + diphosphate. The chain is Glycine--tRNA ligase beta subunit from Ligilactobacillus salivarius (strain UCC118) (Lactobacillus salivarius).